The primary structure comprises 417 residues: MDKLIIKGGKKLTGDVSVSGSKNAALPVFISTILAPGLNEIRNVPFLRDINTTIKVLESLGAVVEGNGNIVKIDTTHVNDVEATYDLVKTMRASVLVLGPLLARHGRARVSLPGGCAIGARPINLHLKGLAALGADIRLEHGYVEAKAKKLKGARINFDIATVGGTEQLMMAAALAKGETILENAAREPEIIDLADILNRMGARIDGAGTDTIRIIGVKELAPVVHDVMPDRIEAGTFMVAAAITGGDIKIHNMKLEHLDALVFKLQDAGVEIINRDNVVRVKGPRRPRAINIKTRPYPGFPTDMQAQFMALMCVADGASVISENIFENRFMHVSELLRFGADITIEGNTATVKGVKKLSGAPVMATDLRASASLILAGLAADNTTEISRIYHLDRGYDSIEKKLAGLGADIKRVKE.

Residue 22–23 (KN) coordinates phosphoenolpyruvate. Residue Arg92 coordinates UDP-N-acetyl-alpha-D-glucosamine. Cys116 serves as the catalytic Proton donor. Cys116 carries the 2-(S-cysteinyl)pyruvic acid O-phosphothioketal modification. UDP-N-acetyl-alpha-D-glucosamine-binding residues include Asp304 and Ile326.

The protein belongs to the EPSP synthase family. MurA subfamily.

It localises to the cytoplasm. It carries out the reaction phosphoenolpyruvate + UDP-N-acetyl-alpha-D-glucosamine = UDP-N-acetyl-3-O-(1-carboxyvinyl)-alpha-D-glucosamine + phosphate. The protein operates within cell wall biogenesis; peptidoglycan biosynthesis. In terms of biological role, cell wall formation. Adds enolpyruvyl to UDP-N-acetylglucosamine. The sequence is that of UDP-N-acetylglucosamine 1-carboxyvinyltransferase from Geobacter metallireducens (strain ATCC 53774 / DSM 7210 / GS-15).